The following is a 433-amino-acid chain: Glutamate-1-semialdehyde 2,1-aminomutase (433 aa).

Lysine 273 is subject to N6-(pyridoxal phosphate)lysine.

The protein belongs to the class-III pyridoxal-phosphate-dependent aminotransferase family. HemL subfamily. In terms of assembly, homodimer. Pyridoxal 5'-phosphate is required as a cofactor.

It is found in the cytoplasm. It catalyses the reaction (S)-4-amino-5-oxopentanoate = 5-aminolevulinate. The protein operates within porphyrin-containing compound metabolism; protoporphyrin-IX biosynthesis; 5-aminolevulinate from L-glutamyl-tRNA(Glu): step 2/2. It functions in the pathway porphyrin-containing compound metabolism; chlorophyll biosynthesis. This is Glutamate-1-semialdehyde 2,1-aminomutase from Gloeothece citriformis (strain PCC 7424) (Cyanothece sp. (strain PCC 7424)).